A 345-amino-acid polypeptide reads, in one-letter code: Phosphate acyltransferase (345 aa).

This sequence belongs to the PlsX family. In terms of assembly, homodimer. Probably interacts with PlsY.

Its subcellular location is the cytoplasm. The catalysed reaction is a fatty acyl-[ACP] + phosphate = an acyl phosphate + holo-[ACP]. It participates in lipid metabolism; phospholipid metabolism. Catalyzes the reversible formation of acyl-phosphate (acyl-PO(4)) from acyl-[acyl-carrier-protein] (acyl-ACP). This enzyme utilizes acyl-ACP as fatty acyl donor, but not acyl-CoA. This is Phosphate acyltransferase from Photorhabdus laumondii subsp. laumondii (strain DSM 15139 / CIP 105565 / TT01) (Photorhabdus luminescens subsp. laumondii).